We begin with the raw amino-acid sequence, 89 residues long: uncharacterized protein (89 aa).

This is an uncharacterized protein from Geobacillus stearothermophilus (Bacillus stearothermophilus).